Here is a 124-residue protein sequence, read N- to C-terminus: Hydrogenase maturation factor HypA (124 aa).

Ni(2+) is bound at residue His2. Residues Cys78, Cys81, Cys97, and Cys100 each contribute to the Zn(2+) site.

This sequence belongs to the HypA/HybF family.

Its function is as follows. Involved in the maturation of [NiFe] hydrogenases. Required for nickel insertion into the metal center of the hydrogenase. In Methanocaldococcus jannaschii (strain ATCC 43067 / DSM 2661 / JAL-1 / JCM 10045 / NBRC 100440) (Methanococcus jannaschii), this protein is Hydrogenase maturation factor HypA.